Consider the following 279-residue polypeptide: Undecaprenyl-diphosphatase (279 aa).

A run of 8 helical transmembrane segments spans residues 2–22, 44–64, 85–105, 113–133, 163–183, 188–208, 223–243, and 255–275; these read LIIELLKAIFFGIIEGITEWL, AFIEMFNIVIQLGAIIAVMLI, WQLWLKVVIACIPSILIAVPL, FYFMVPIAIALIVYGIAFIWI, VLSIVPGTSRSGATILGAIIL, TVAADFTFFLAIPTMFGYSGL, AQVLILLVASLTAFVVSLLAI, and FTIFGKYRIVLGSLLLIYSFF.

This sequence belongs to the UppP family.

The protein localises to the cell membrane. The catalysed reaction is di-trans,octa-cis-undecaprenyl diphosphate + H2O = di-trans,octa-cis-undecaprenyl phosphate + phosphate + H(+). In terms of biological role, catalyzes the dephosphorylation of undecaprenyl diphosphate (UPP). Confers resistance to bacitracin. The sequence is that of Undecaprenyl-diphosphatase from Streptococcus pyogenes serotype M28 (strain MGAS6180).